We begin with the raw amino-acid sequence, 2528 residues long: Reducing polyketide synthase PKS1 (2528 aa).

Residues 11-436 (ITPIAVVGMS…GANVHAILES (426 aa)) enclose the Ketosynthase family 3 (KS3) domain. Active-site for beta-ketoacyl synthase activity residues include cysteine 186, histidine 321, and histidine 359. The malonyl-CoA:ACP transacylase (MAT) stretch occupies residues 573–868 (FVFTGQGAQW…LGGPISQVID (296 aa)). The N-terminal hotdog fold stretch occupies residues 954–1092 (LDLIGVFDVH…GLISVLKSSK (139 aa)). The 325-residue stretch at 954 to 1278 (LDLIGVFDVH…LVALDRPNSS (325 aa)) folds into the PKS/mFAS DH domain. The segment at 956–1277 (LIGVFDVHSS…TLVALDRPNS (322 aa)) is dehydratase (DH) domain. Histidine 986 serves as the catalytic Proton acceptor; for dehydratase activity. A C-terminal hotdog fold region spans residues 1122-1278 (KTEWDVKDMY…LVALDRPNSS (157 aa)). Aspartate 1187 acts as the Proton donor; for dehydratase activity in catalysis. Residues 1827 to 2139 (GLLDSLHFTV…TGRHMGKMVA (313 aa)) form an enoyl reductase (ER) domain region. A ketoreductase (KR) domain region spans residues 2164–2341 (ASYLLVGGVG…ATVIDIGAVH (178 aa)). A Carrier domain is found at 2442–2519 (SAVTIVLSAL…ALAVKIAARS (78 aa)). The residue at position 2479 (serine 2479) is an O-(pantetheine 4'-phosphoryl)serine.

Its pathway is mycotoxin biosynthesis. In terms of biological role, reducing polyketide synthase (PKS); part of the Tox1A locus, one of the 2 loci that mediate the biosynthesis of T-toxin, a family of linear polyketides 37 to 45 carbons in length, of which the major component is 41 carbons, and which leads to high virulence to maize. One of the PKSs (PKS1 or PKS2) could synthesize a precursor, used subsequently by the other PKS as starter unit, to add additional carbons. Variability in the length of the final carbon backbone C35-47 could be achieved by varying the number of condensation cycles, or use of different starter or extender units or might be due to decarboxylation of the penultimate product, catalyzed by DEC1. Additional proteins are required for the biosynthesis of T-toxin, including oxidoreductases RED1, RED2, RED3, LAM1 and OXI1, as well as esterase TOX9. This Cochliobolus heterostrophus (strain C4 / ATCC 48331 / race T) (Southern corn leaf blight fungus) protein is Reducing polyketide synthase PKS1.